We begin with the raw amino-acid sequence, 466 residues long: Soluble pyridine nucleotide transhydrogenase (466 aa).

Residue 36–45 (ERYQNVGGGC) participates in FAD binding.

It belongs to the class-I pyridine nucleotide-disulfide oxidoreductase family. It depends on FAD as a cofactor.

It localises to the cytoplasm. The enzyme catalyses NAD(+) + NADPH = NADH + NADP(+). In terms of biological role, conversion of NADPH, generated by peripheral catabolic pathways, to NADH, which can enter the respiratory chain for energy generation. In Escherichia coli O6:K15:H31 (strain 536 / UPEC), this protein is Soluble pyridine nucleotide transhydrogenase.